The primary structure comprises 423 residues: CDP-diacylglycerol--serine O-phosphatidyltransferase 2 (423 aa).

9 helical membrane passes run 38-58 (PHTISVLLVGACLLIWASGAL), 77-97 (WAMIAVFLAYCTLQAPSTILI), 103-123 (VWRLVHGLAVVYLVALAFLLF), 195-215 (LLLWVLSIGFELMELTFRHML), 222-242 (WWDSIILDILICNWFGIWAGM), 294-314 (FVQVLFLCVVFMTVELNTFFL), 319-339 (WIPPRNPLVVYRLILWWLIAI), 359-379 (GAFCWLSLAICIVELLICMKF), and 390-410 (TWLIIFWSSVGVALVVFLLAW).

This sequence belongs to the CDP-alcohol phosphatidyltransferase class-I family.

It localises to the endoplasmic reticulum membrane. The enzyme catalyses a CDP-1,2-diacyl-sn-glycerol + L-serine = a 1,2-diacyl-sn-glycero-3-phospho-L-serine + CMP + H(+). Its pathway is phospholipid metabolism; phosphatidylethanolamine biosynthesis; phosphatidylethanolamine from CDP-diacylglycerol: step 1/2. Its function is as follows. Catalyzes a base-exchange reaction in which the polar head group of phosphatidylethanolamine (PE) or phosphatidylcholine (PC) is replaced by L-serine. The chain is CDP-diacylglycerol--serine O-phosphatidyltransferase 2 (PSS2) from Oryza sativa subsp. japonica (Rice).